A 101-amino-acid chain; its full sequence is Small ribosomal subunit protein uS10 (101 aa).

It belongs to the universal ribosomal protein uS10 family. As to quaternary structure, part of the 30S ribosomal subunit.

Functionally, involved in the binding of tRNA to the ribosomes. The protein is Small ribosomal subunit protein uS10 of Corynebacterium jeikeium (strain K411).